Reading from the N-terminus, the 245-residue chain is Cysteine-rich secretory protein 3 (245 aa).

Residues 1-22 (MALLPVLLFLAAVLLPFFPASG) form the signal peptide. One can recognise an SCP domain in the interval 42–171 (VNKHNDLRRT…TLKYYYVCQY (130 aa)). Intrachain disulfides connect Cys191–Cys198, Cys194–Cys203, Cys207–Cys240, Cys216–Cys234, and Cys225–Cys238. Residues 207–240 (CEYEDLVSNCDSLKKIAGCEHELLKENCKTTCQC) enclose the ShKT domain.

The protein belongs to the CRISP family. As to quaternary structure, interacts with A1BG. In terms of tissue distribution, expressed in the salivary gland, in the ampulla and the seminal vesicle.

It localises to the secreted. This is Cysteine-rich secretory protein 3 (CRISP3) from Equus caballus (Horse).